Reading from the N-terminus, the 1425-residue chain is Death-associated protein kinase dapk-1 (1425 aa).

Residues 28-289 (YEIETELGSG…VEECLQHPWI (262 aa)) enclose the Protein kinase domain. Residues 34–42 (LGSGQFAVV) and lysine 57 each bind ATP. Aspartate 155 functions as the Proton acceptor in the catalytic mechanism. 10 ANK repeats span residues 392–421 (NGAT…NICA), 425–454 (NGDT…DVDS), 458–487 (TGET…RLDL), 491–520 (SGDT…PLHL), 524–553 (REET…PIDA), 557–586 (DGKT…DINH), 590–619 (HGDT…TVDS), 623–652 (NKKT…DVTL), 810–841 (GGYE…DPTE), and 934–963 (IGMK…ILDT). One can recognise a Roc domain in the interval 695-950 (LDTSLRRIKL…MELAKCRTNI (256 aa)). Residues 1308-1389 (ELACLLDPPH…DARDALYRTV (82 aa)) enclose the Death domain.

The protein belongs to the protein kinase superfamily. CAMK Ser/Thr protein kinase family. DAP kinase subfamily. As to quaternary structure, interacts with ptrn-1. Requires Mg(2+) as cofactor. Expressed in epidermis, muscles and neurons.

The protein resides in the cytoplasm. It localises to the cytosol. It is found in the cytoskeleton. It catalyses the reaction L-seryl-[protein] + ATP = O-phospho-L-seryl-[protein] + ADP + H(+). The enzyme catalyses L-threonyl-[protein] + ATP = O-phospho-L-threonyl-[protein] + ADP + H(+). Its function is as follows. Negative regulator of epidermal barrier repair and innate immune responses to wounding. The role in epidermal tissue integrity and wound healing is established through the inhibition of epidermal microtubule stability, possibly via the negative regulation of the microtubule minus-end binding protein ptrn-1. In epidermis, prevents expression of specific unc-44 isoforms probably by promoting nuclear localization of pinn-1, which in turn may affect sydn-1-ssup-72-mediated regulation of alternative polyadenylation of unc-44 mRNA. Appears to act downstream of or in parallel to muscarinic signaling in the regulation of autophagy. The polypeptide is Death-associated protein kinase dapk-1 (Caenorhabditis elegans).